Here is a 233-residue protein sequence, read N- to C-terminus: Cytochrome c biogenesis ATP-binding export protein CcmA (233 aa).

Residues 17–233 enclose the ABC transporter domain; it reads FAGEDLLCVR…AAGLFLEDEG (217 aa). An ATP-binding site is contributed by 49-56; the sequence is GPNGSGKS.

This sequence belongs to the ABC transporter superfamily. CcmA exporter (TC 3.A.1.107) family. As to quaternary structure, the complex is composed of two ATP-binding proteins (CcmA) and two transmembrane proteins (CcmB).

It is found in the cell inner membrane. The catalysed reaction is heme b(in) + ATP + H2O = heme b(out) + ADP + phosphate + H(+). In terms of biological role, part of the ABC transporter complex CcmAB involved in the biogenesis of c-type cytochromes; once thought to export heme, this seems not to be the case, but its exact role is uncertain. Responsible for energy coupling to the transport system. This chain is Cytochrome c biogenesis ATP-binding export protein CcmA, found in Rhodospirillum rubrum (strain ATCC 11170 / ATH 1.1.1 / DSM 467 / LMG 4362 / NCIMB 8255 / S1).